The chain runs to 403 residues: Queuine tRNA-ribosyltransferase catalytic subunit 1 (403 aa).

Ala-2 is modified (N-acetylalanine). Residue Asp-105 is the Proton acceptor of the active site. Asp-105–Phe-109 serves as a coordination point for queuine. At Ser-139 the chain carries Phosphoserine. Positions 159, 202, and 229 each coordinate queuine. Residues Gly-260–Asp-266 form an RNA binding region. Asp-279 acts as the Nucleophile in catalysis. Residues Thr-284–Arg-288 form an RNA binding; important for wobble base 34 recognition region. Residues Cys-317, Cys-319, Cys-322, and His-348 each coordinate Zn(2+).

This sequence belongs to the queuine tRNA-ribosyltransferase family. In terms of assembly, heterodimer of a catalytic subunit QTRT1 and an accessory subunit QTRT2. Requires Zn(2+) as cofactor.

It localises to the cytoplasm. It is found in the mitochondrion outer membrane. The catalysed reaction is guanosine(34) in tRNA + queuine = queuosine(34) in tRNA + guanine. In terms of biological role, catalytic subunit of the queuine tRNA-ribosyltransferase (TGT) that catalyzes the base-exchange of a guanine (G) residue with queuine (Q) at position 34 (anticodon wobble position) in tRNAs with GU(N) anticodons (tRNA-Asp, -Asn, -His and -Tyr), resulting in the hypermodified nucleoside queuosine (7-(((4,5-cis-dihydroxy-2-cyclopenten-1-yl)amino)methyl)-7-deazaguanosine). Catalysis occurs through a double-displacement mechanism. The nucleophile active site attacks the C1' of nucleotide 34 to detach the guanine base from the RNA, forming a covalent enzyme-RNA intermediate. The proton acceptor active site deprotonates the incoming queuine, allowing a nucleophilic attack on the C1' of the ribose to form the product. The chain is Queuine tRNA-ribosyltransferase catalytic subunit 1 from Rattus norvegicus (Rat).